The chain runs to 367 residues: tRNA (guanine(26)-N(2))-dimethyltransferase (367 aa).

One can recognise a Trm1 methyltransferase domain in the interval 1–365 (MRVSEGRVTV…ADVVEIREAT (365 aa)). Arg34, Arg64, Asp79, Asp105, and Ala106 together coordinate S-adenosyl-L-methionine. 4 residues coordinate Zn(2+): Cys234, Cys237, Cys254, and Cys257.

It belongs to the class I-like SAM-binding methyltransferase superfamily. Trm1 family.

It catalyses the reaction guanosine(26) in tRNA + 2 S-adenosyl-L-methionine = N(2)-dimethylguanosine(26) in tRNA + 2 S-adenosyl-L-homocysteine + 2 H(+). Functionally, dimethylates a single guanine residue at position 26 of a number of tRNAs using S-adenosyl-L-methionine as donor of the methyl groups. In Haloarcula marismortui (strain ATCC 43049 / DSM 3752 / JCM 8966 / VKM B-1809) (Halobacterium marismortui), this protein is tRNA (guanine(26)-N(2))-dimethyltransferase.